Consider the following 1074-residue polypeptide: Isoleucine--tRNA ligase (1074 aa).

A 'HIGH' region motif is present at residues 50-60 (PYTSGAAHMGT). The short motif at 605–609 (GMSKS) is the 'KMSKS' region element. Lysine 608 contacts ATP.

The protein belongs to the class-I aminoacyl-tRNA synthetase family. IleS type 2 subfamily. In terms of assembly, monomer. The cofactor is Zn(2+).

The protein localises to the cytoplasm. The catalysed reaction is tRNA(Ile) + L-isoleucine + ATP = L-isoleucyl-tRNA(Ile) + AMP + diphosphate. In terms of biological role, catalyzes the attachment of isoleucine to tRNA(Ile). As IleRS can inadvertently accommodate and process structurally similar amino acids such as valine, to avoid such errors it has two additional distinct tRNA(Ile)-dependent editing activities. One activity is designated as 'pretransfer' editing and involves the hydrolysis of activated Val-AMP. The other activity is designated 'posttransfer' editing and involves deacylation of mischarged Val-tRNA(Ile). The polypeptide is Isoleucine--tRNA ligase (Haloarcula marismortui (strain ATCC 43049 / DSM 3752 / JCM 8966 / VKM B-1809) (Halobacterium marismortui)).